The chain runs to 180 residues: uncharacterized protein (180 aa).

Residues 114–147 are a coiled coil; the sequence is EDIYEDIVDVRLENQSLEEQLEDFKECSRALKKY.

It belongs to the mimivirus L74/L77/R857 family.

This is an uncharacterized protein from Acanthamoeba polyphaga mimivirus (APMV).